A 104-amino-acid chain; its full sequence is T-complex protein 1 subunit zeta (104 aa).

Position 24 (G24) interacts with ADP. An ATP-binding site is contributed by G24. D75 lines the Mg(2+) pocket. ADP contacts are provided by G76, T78, and S79. ATP contacts are provided by G76 and T78.

This sequence belongs to the TCP-1 chaperonin family. As to quaternary structure, component of the chaperonin-containing T-complex (TRiC), a hexadecamer composed of two identical back-to-back stacked rings enclosing a protein folding chamber. Each ring is made up of eight different subunits: TCP1/CCT1, CCT2, CCT3, CCT4, CCT5, CCT6A/CCT6, CCT7, CCT8. Interacts with PACRG.

The protein resides in the cytoplasm. It carries out the reaction ATP + H2O = ADP + phosphate + H(+). Its function is as follows. Component of the chaperonin-containing T-complex (TRiC), a molecular chaperone complex that assists the folding of actin, tubulin and other proteins upon ATP hydrolysis. The TRiC complex mediates the folding of WRAP53/TCAB1, thereby regulating telomere maintenance. The sequence is that of T-complex protein 1 subunit zeta (CCT6) from Sus scrofa (Pig).